The primary structure comprises 185 residues: Peptide deformylase (185 aa).

Fe cation contacts are provided by cysteine 98 and histidine 140. Glutamate 141 is a catalytic residue. Fe cation is bound at residue histidine 144.

The protein belongs to the polypeptide deformylase family. Fe(2+) serves as cofactor.

The catalysed reaction is N-terminal N-formyl-L-methionyl-[peptide] + H2O = N-terminal L-methionyl-[peptide] + formate. In terms of biological role, removes the formyl group from the N-terminal Met of newly synthesized proteins. Requires at least a dipeptide for an efficient rate of reaction. N-terminal L-methionine is a prerequisite for activity but the enzyme has broad specificity at other positions. The chain is Peptide deformylase from Parabacteroides distasonis (strain ATCC 8503 / DSM 20701 / CIP 104284 / JCM 5825 / NCTC 11152).